The chain runs to 159 residues: 18.0 kDa class I heat shock protein (159 aa).

In terms of domain architecture, sHSP spans 45–159 (ETAAFANTHI…PEVKSIHISG (115 aa)).

It belongs to the small heat shock protein (HSP20) family. As to quaternary structure, forms oligomeric structures.

The protein resides in the cytoplasm. The sequence is that of 18.0 kDa class I heat shock protein from Daucus carota (Wild carrot).